The chain runs to 359 residues: Glycerol-1-phosphate dehydrogenase [NAD(P)+] (359 aa).

Residues Gly-107–Asp-111 and Thr-129–Ser-132 contribute to the NAD(+) site. Asp-134 lines the substrate pocket. Ser-138 contacts NAD(+). Asp-181 is a substrate binding site. 2 residues coordinate Zn(2+): Asp-181 and His-261. His-265 contributes to the substrate binding site. His-277 contributes to the Zn(2+) binding site.

This sequence belongs to the glycerol-1-phosphate dehydrogenase family. It depends on Zn(2+) as a cofactor.

The protein resides in the cytoplasm. It catalyses the reaction sn-glycerol 1-phosphate + NAD(+) = dihydroxyacetone phosphate + NADH + H(+). The catalysed reaction is sn-glycerol 1-phosphate + NADP(+) = dihydroxyacetone phosphate + NADPH + H(+). The protein operates within membrane lipid metabolism; glycerophospholipid metabolism. Catalyzes the NAD(P)H-dependent reduction of dihydroxyacetonephosphate (DHAP or glycerone phosphate) to glycerol 1-phosphate (G1P). The G1P thus generated is used as the glycerophosphate backbone of phospholipids in the cellular membranes of Archaea. The protein is Glycerol-1-phosphate dehydrogenase [NAD(P)+] of Methanoregula boonei (strain DSM 21154 / JCM 14090 / 6A8).